A 432-amino-acid chain; its full sequence is D-amino acid dehydrogenase (432 aa).

Valine 3–tyrosine 17 is an FAD binding site.

The protein belongs to the DadA oxidoreductase family. FAD is required as a cofactor.

It carries out the reaction a D-alpha-amino acid + A + H2O = a 2-oxocarboxylate + AH2 + NH4(+). It participates in amino-acid degradation; D-alanine degradation; NH(3) and pyruvate from D-alanine: step 1/1. In terms of biological role, oxidative deamination of D-amino acids. The protein is D-amino acid dehydrogenase of Ectopseudomonas mendocina (strain ymp) (Pseudomonas mendocina).